We begin with the raw amino-acid sequence, 359 residues long: Serpentine receptor class epsilon-33 (359 aa).

A run of 7 helical transmembrane segments spans residues 29 to 49, 65 to 85, 134 to 156, 168 to 188, 194 to 214, 255 to 275, and 285 to 305; these read VIIS…VNVS, ILAL…FITI, YMYS…SVLI, PAIL…GLLF, LSAH…YVFV, LVFA…ALHY, and LIEN…MLSI.

This sequence belongs to the nematode receptor-like protein sre family.

It localises to the membrane. In Caenorhabditis elegans, this protein is Serpentine receptor class epsilon-33 (sre-33).